Reading from the N-terminus, the 110-residue chain is MTQCPFTPCADGLILAVRLTPRAGRTGLDGVRTEPDGRPILCLRVAAPPVEGAANAALTAFVAKSLGLRKSEVTLVSGETARTKRLHLSGDPQALAARATAWFGGDGPGS.

The protein belongs to the UPF0235 family.

The polypeptide is UPF0235 protein Mpop_2087 (Methylorubrum populi (strain ATCC BAA-705 / NCIMB 13946 / BJ001) (Methylobacterium populi)).